The chain runs to 63 residues: Beta-defensin 6 (63 aa).

An N-terminal signal peptide occupies residues 1–22; it reads MKIHYLLFAFILVMLSPLAAFS. At Q23 the chain carries Pyrrolidone carboxylic acid. 3 disulfides stabilise this stretch: C31–C59, C38–C52, and C42–C60.

The protein belongs to the beta-defensin family. In terms of tissue distribution, predominantly expressed in skeletal muscle, also expressed in esophagus, tongue, and trachea. Also expressed in lung when induced by lipopolysaccharide.

Its subcellular location is the secreted. Functionally, has potent antibacterial activity against E.coli (ATCC 25922). The polypeptide is Beta-defensin 6 (Defb6) (Mus musculus (Mouse)).